Here is a 218-residue protein sequence, read N- to C-terminus: 3-isopropylmalate dehydratase small subunit (218 aa).

The protein belongs to the LeuD family. LeuD type 1 subfamily. Heterodimer of LeuC and LeuD.

The enzyme catalyses (2R,3S)-3-isopropylmalate = (2S)-2-isopropylmalate. The protein operates within amino-acid biosynthesis; L-leucine biosynthesis; L-leucine from 3-methyl-2-oxobutanoate: step 2/4. Its function is as follows. Catalyzes the isomerization between 2-isopropylmalate and 3-isopropylmalate, via the formation of 2-isopropylmaleate. The sequence is that of 3-isopropylmalate dehydratase small subunit from Alkalilimnicola ehrlichii (strain ATCC BAA-1101 / DSM 17681 / MLHE-1).